Consider the following 31-residue polypeptide: MAIDNTQIFIALLTALIPAFFALKLGKELSK.

Residues 7–26 (QIFIALLTALIPAFFALKLG) traverse the membrane as a helical segment.

The protein belongs to the PsaM family.

It is found in the plastid. The protein localises to the chloroplast thylakoid membrane. This is Photosystem I reaction center subunit XII from Euglena granulata.